The primary structure comprises 435 residues: Cytochrome c biogenesis protein CcsB (435 aa).

Helical transmembrane passes span 11 to 31 (LRVA…GTAL), 69 to 89 (SDWF…CSWR), and 159 to 179 (VGPL…VWGV).

Belongs to the Ccs1/CcsB family. May interact with CcsA.

It localises to the plastid. Its subcellular location is the organellar chromatophore thylakoid membrane. Its function is as follows. Required during biogenesis of c-type cytochromes (cytochrome c6 and cytochrome f) at the step of heme attachment. The protein is Cytochrome c biogenesis protein CcsB of Paulinella chromatophora.